Here is a 712-residue protein sequence, read N- to C-terminus: MVKLAKAGKNQGDPKKMAPPPKEVEEDSEDEEMSEDEEDDSSGEEVVIPQKKGKKAAATSAKKVVVSPTKKVAVATPAKKAAVTPGKKAAATPAKKTVTPAKAVTTPGKKGATPGKALVATPGKKGAAIPAKGAKNGKNAKKEDSDEEEEDDSEEDEDDDEDEDEDEDEIEPAAMKAAAAAPASEDEDDEDDEDDEDEDDDEEDDSEEEAMETTPAKGKKAAKVVPVKAKNVAEDEDEEEDDEDEDDDDDDDDDDEDDEDEDDEEEEEEEEEEPVKEAPGKRKKEMAKQKAAPEAKKQKVEGTEPTTAFNLFVGNLNFNKSAPELKTGISDVFAKNDLAVVDVRIGMTRKFGYVDFESAEDLEKALELTGLKVFGNEIKLEKPKGKDSKKERDARTLLAKNLPYKVTQDELKEVFEDAAEIRLVSKDGKSKGIAYIEFKTEADAEKTFEEKQGTEIDGRSISLYYTGEKGQNQDYRGGKNSTWSGESKTLVLSNLSYSATEETLQEVFEKATFIKVPQNQNGKSKGYAFIEFASFEDAKEALNSCNKREIEGRAIRLELQGPRGSPNARSQPSKTLFVKGLSEDTTEETLKESFDGSVRARIVTDRETGSSKGFGFVDFNSEEDAKAAKEAMEDGEIDGNKVTLDWAKPKGEGGFGGRGGGRGGFGGRGGGRGGRGGFGGRGRGGFGGRGGFRGGRGGGGDHKPQGKKTKFE.

The segment at 1–305 (MVKLAKAGKN…KKQKVEGTEP (305 aa)) is disordered. Residues Lys9, Lys15, and Lys16 each carry the N6-acetyllysine modification. Residues 24–43 (VEEDSEDEEMSEDEEDDSSG) show a composition bias toward acidic residues. Phosphoserine is present on residues Ser28, Ser34, Ser41, and Ser42. Positions 56–107 (AAATSAKKVVVSPTKKVAVATPAKKAAVTPGKKAAATPAKKTVTPAKAVTTP) are enriched in low complexity. The stretch at 58-65 (ATSAKKVV) is repeat 1. The 8 X 8 AA tandem repeats of X-T-P-X-K-K-X-X stretch occupies residues 58 to 135 (ATSAKKVVVS…GAAIPAKGAK (78 aa)). The residue at position 67 (Ser67) is a Phosphoserine. 4 positions are modified to phosphothreonine: Thr69, Thr76, Thr84, and Thr92. A run of 3 repeats spans residues 75–82 (ATPAKKAA), 83–90 (VTPGKKAA), and 91–98 (ATPAKKTV). Residue Lys96 is modified to N6-acetyllysine. At Thr99 the chain carries Phosphothreonine. One copy of the 5; truncated repeat lies at 99 to 104 (TPAKAV). At Lys102 the chain carries N6-acetyllysine. Repeat unit 6 spans residues 105 to 112 (TTPGKKGA). Position 106 is a phosphothreonine (Thr106). Lys109 carries the post-translational modification N6-acetyllysine. Residue Thr113 is modified to Phosphothreonine. An N6-acetyllysine modification is found at Lys116. A run of 2 repeats spans residues 120-127 (ATPGKKGA) and 128-135 (AIPAKGAK). A Phosphothreonine modification is found at Thr121. The segment covering 122–137 (PGKKGAAIPAKGAKNG) has biased composition (low complexity). Lys124 carries the N6-acetyllysine modification. Ser145 and Ser153 each carry phosphoserine. Residues 145–171 (SDEEEEDDSEEDEDDDEDEDEDEDEIE) are compositionally biased toward acidic residues. A compositionally biased stretch (low complexity) spans 172–183 (PAAMKAAAAAPA). A phosphoserine mark is found at Ser184 and Ser206. The segment covering 184–211 (SEDEDDEDDEDDEDEDDDEEDDSEEEAM) has biased composition (acidic residues). Residue Thr214 is modified to Phosphothreonine. A compositionally biased stretch (acidic residues) spans 234-274 (EDEDEEEDDEDEDDDDDDDDDDEDDEDEDDEEEEEEEEEEP). The span at 275–302 (VKEAPGKRKKEMAKQKAAPEAKKQKVEG) shows a compositional bias: basic and acidic residues. A Glycyl lysine isopeptide (Lys-Gly) (interchain with G-Cter in SUMO1); alternate cross-link involves residue Lys299. Residue Lys299 forms a Glycyl lysine isopeptide (Lys-Gly) (interchain with G-Cter in SUMO2); alternate linkage. Phosphothreonine is present on Thr303. 2 RRM domains span residues 309-385 (FNLF…KPKG) and 395-468 (RTLL…YTGE). Position 320 is an N6-acetyllysine (Lys320). Lys326 participates in a covalent cross-link: Glycyl lysine isopeptide (Lys-Gly) (interchain with G-Cter in SUMO1); alternate. Lys326 is covalently cross-linked (Glycyl lysine isopeptide (Lys-Gly) (interchain with G-Cter in SUMO2); alternate). Lys350 carries the N6-acetyllysine modification. At Ser358 the chain carries Phosphoserine. Residue Thr369 is modified to Phosphothreonine. Lys372 is covalently cross-linked (Glycyl lysine isopeptide (Lys-Gly) (interchain with G-Cter in SUMO2)). Lys379 participates in a covalent cross-link: Glycyl lysine isopeptide (Lys-Gly) (interchain with G-Cter in SUMO2); alternate. The residue at position 379 (Lys379) is an N6-acetyllysine; alternate. Lys400 and Lys405 each carry N6-acetyllysine. Thr407 is modified (phosphothreonine). 2 positions are modified to N6-acetyllysine: Lys429 and Lys446. 2 positions are modified to phosphoserine: Ser460 and Ser462. N6-acetyllysine occurs at positions 469 and 479. Positions 488–562 (KTLVLSNLSY…RAIRLELQGP (75 aa)) constitute an RRM 3 domain. Lys515 is covalently cross-linked (Glycyl lysine isopeptide (Lys-Gly) (interchain with G-Cter in SUMO2); alternate). Lys515 is modified (N6-acetyllysine; alternate). Residue Lys523 is modified to N6-acetyllysine. Phosphoserine is present on Ser565. Lys574 bears the N6-acetyllysine mark. The 76-residue stretch at 574–649 (KTLFVKGLSE…NKVTLDWAKP (76 aa)) folds into the RRM 4 domain. Residue Lys579 forms a Glycyl lysine isopeptide (Lys-Gly) (interchain with G-Cter in SUMO2); alternate linkage. N6-acetyllysine; alternate is present on Lys579. The residue at position 582 (Ser582) is a Phosphoserine. Lys591 participates in a covalent cross-link: Glycyl lysine isopeptide (Lys-Gly) (interchain with G-Cter in SUMO1); alternate. Lys591 is covalently cross-linked (Glycyl lysine isopeptide (Lys-Gly) (interchain with G-Cter in SUMO2); alternate). Residues Ser593 and Ser621 each carry the phosphoserine modification. A Glycyl lysine isopeptide (Lys-Gly) (interchain with G-Cter in SUMO2) cross-link involves residue Lys626. The segment at 642–712 (VTLDWAKPKG…KPQGKKTKFE (71 aa)) is disordered. Lys648 is modified (N6-acetyllysine). The segment covering 652 to 698 (EGGFGGRGGGRGGFGGRGGGRGGRGGFGGRGRGGFGGRGGFRGGRGG) has biased composition (gly residues). 9 positions are modified to asymmetric dimethylarginine: Arg658, Arg662, Arg668, Arg672, Arg675, Arg681, Arg683, Arg689, and Arg693. An Asymmetric dimethylarginine; alternate modification is found at Arg696. Arg696 carries the post-translational modification Omega-N-methylarginine; alternate. Residues 699–712 (GGDHKPQGKKTKFE) show a composition bias toward basic and acidic residues.

In terms of assembly, identified in a IGF2BP1-dependent mRNP granule complex containing untranslated mRNAs. Component of the SWAP complex that consists of NPM1, NCL/nucleolin, PARP1 and SWAP70. Component of a complex which is at least composed of HTATSF1/Tat-SF1, the P-TEFb complex components CDK9 and CCNT1, RNA polymerase II, SUPT5H, and NCL/nucleolin. Interacts with AICDA. Interacts with APTX. Interacts with C1QBP. Interacts with ERBB4. Interacts (via C-terminus) with FMR1 isoform 6 (via N-terminus). Interacts with GZF1; this interaction is important for nucleolar localization of GZF1. Interacts with NSUN2. Interacts with NVL. Interacts (via N-terminus domain) with SETX. Interacts (via RRM1 and C-terminal RRM4/Arg/Gly-rich domains) with TERT; the interaction is important for nucleolar localization of TERT. Interacts with WDR46. Interacts with ZFP36. Interacts with LRRC34. Interacts with RRP1B. Interacts with HNRNPU; this interaction occurs during mitosis. Interacts with RIOK1; RIOK1 recruits NCL to the PRMT5 for symmetrically methylation. Interacts with ZBTB7B. Interacts with MDK; this interaction promotes NCL clustering and lateral movements of this complex into lipid rafts leading to MDK internalization. Interacts with HDGF. Interacts with ALKBH2. Interacts with IGFBP5; this interaction is necessary for IGFBP5 localization to the nucleus. Interacts with DDX24 (when ubiquitinated); this interaction may be important during ribosome biogenesis. In terms of processing, some glutamate residues are glycylated by TTLL8. This modification occurs exclusively on glutamate residues and results in a glycine chain on the gamma-carboxyl group. Symmetrically methylated by PRMT5.

It localises to the nucleus. The protein localises to the nucleolus. Its subcellular location is the cytoplasm. Functionally, nucleolin is the major nucleolar protein of growing eukaryotic cells. It is found associated with intranucleolar chromatin and pre-ribosomal particles. It induces chromatin decondensation by binding to histone H1. It is thought to play a role in pre-rRNA transcription and ribosome assembly. May play a role in the process of transcriptional elongation. Binds RNA oligonucleotides with 5'-UUAGGG-3' repeats more tightly than the telomeric single-stranded DNA 5'-TTAGGG-3' repeats. In Pongo abelii (Sumatran orangutan), this protein is Nucleolin (NCL).